A 211-amino-acid polypeptide reads, in one-letter code: Urease accessory protein UreF (211 aa).

Residues 71 to 93 are disordered; that stretch reads DDADRETDARTPAPAARHASRSQ.

It belongs to the UreF family. As to quaternary structure, ureD, UreF and UreG form a complex that acts as a GTP-hydrolysis-dependent molecular chaperone, activating the urease apoprotein by helping to assemble the nickel containing metallocenter of UreC. The UreE protein probably delivers the nickel.

It localises to the cytoplasm. Functionally, required for maturation of urease via the functional incorporation of the urease nickel metallocenter. The chain is Urease accessory protein UreF from Mycobacterium tuberculosis (strain ATCC 25177 / H37Ra).